The chain runs to 190 residues: Imidazoleglycerol-phosphate dehydratase (190 aa).

This sequence belongs to the imidazoleglycerol-phosphate dehydratase family.

Its subcellular location is the cytoplasm. The catalysed reaction is D-erythro-1-(imidazol-4-yl)glycerol 3-phosphate = 3-(imidazol-4-yl)-2-oxopropyl phosphate + H2O. The protein operates within amino-acid biosynthesis; L-histidine biosynthesis; L-histidine from 5-phospho-alpha-D-ribose 1-diphosphate: step 6/9. This is Imidazoleglycerol-phosphate dehydratase from Sulfurimonas denitrificans (strain ATCC 33889 / DSM 1251) (Thiomicrospira denitrificans (strain ATCC 33889 / DSM 1251)).